The sequence spans 281 residues: Ribosomal RNA small subunit methyltransferase A (281 aa).

Positions 18, 20, 45, 66, 91, and 118 each coordinate S-adenosyl-L-methionine.

The protein belongs to the class I-like SAM-binding methyltransferase superfamily. rRNA adenine N(6)-methyltransferase family. RsmA subfamily.

Its subcellular location is the cytoplasm. It catalyses the reaction adenosine(1518)/adenosine(1519) in 16S rRNA + 4 S-adenosyl-L-methionine = N(6)-dimethyladenosine(1518)/N(6)-dimethyladenosine(1519) in 16S rRNA + 4 S-adenosyl-L-homocysteine + 4 H(+). In terms of biological role, specifically dimethylates two adjacent adenosines (A1518 and A1519) in the loop of a conserved hairpin near the 3'-end of 16S rRNA in the 30S particle. May play a critical role in biogenesis of 30S subunits. This is Ribosomal RNA small subunit methyltransferase A from Histophilus somni (strain 129Pt) (Haemophilus somnus).